A 570-amino-acid polypeptide reads, in one-letter code: Dihydroxy-acid dehydratase (570 aa).

Positions 1 to 25 (MSQQDSPANADHRRRHSSIVVDGPG) are disordered. Cys-60 lines the [2Fe-2S] cluster pocket. A Mg(2+)-binding site is contributed by Asp-92. Cys-133 lines the [2Fe-2S] cluster pocket. Asp-134 and Lys-135 together coordinate Mg(2+). Lys-135 carries the N6-carboxylysine modification. [2Fe-2S] cluster is bound at residue Cys-202. Glu-453 serves as a coordination point for Mg(2+). Residue Ser-479 is the Proton acceptor of the active site.

Belongs to the IlvD/Edd family. As to quaternary structure, homodimer. The cofactor is [2Fe-2S] cluster. Mg(2+) is required as a cofactor.

The catalysed reaction is (2R)-2,3-dihydroxy-3-methylbutanoate = 3-methyl-2-oxobutanoate + H2O. It catalyses the reaction (2R,3R)-2,3-dihydroxy-3-methylpentanoate = (S)-3-methyl-2-oxopentanoate + H2O. It functions in the pathway amino-acid biosynthesis; L-isoleucine biosynthesis; L-isoleucine from 2-oxobutanoate: step 3/4. Its pathway is amino-acid biosynthesis; L-valine biosynthesis; L-valine from pyruvate: step 3/4. Its function is as follows. Functions in the biosynthesis of branched-chain amino acids. Catalyzes the dehydration of (2R,3R)-2,3-dihydroxy-3-methylpentanoate (2,3-dihydroxy-3-methylvalerate) into 2-oxo-3-methylpentanoate (2-oxo-3-methylvalerate) and of (2R)-2,3-dihydroxy-3-methylbutanoate (2,3-dihydroxyisovalerate) into 2-oxo-3-methylbutanoate (2-oxoisovalerate), the penultimate precursor to L-isoleucine and L-valine, respectively. This chain is Dihydroxy-acid dehydratase, found in Chromohalobacter salexigens (strain ATCC BAA-138 / DSM 3043 / CIP 106854 / NCIMB 13768 / 1H11).